The chain runs to 248 residues: Ureidoacrylate amidohydrolase RutB (248 aa).

The active-site Proton acceptor is Asp41. Residue Lys150 is part of the active site. The Nucleophile role is filled by Cys183.

This sequence belongs to the isochorismatase family. RutB subfamily.

It catalyses the reaction (Z)-3-ureidoacrylate + H2O + H(+) = (Z)-3-aminoacrylate + NH4(+) + CO2. The enzyme catalyses (Z)-3-ureidoacrylate + H2O = (Z)-3-aminoacrylate + carbamate + H(+). It carries out the reaction (Z)-2-methylureidoacrylate + H2O + H(+) = (Z)-2-methylaminoacrylate + NH4(+) + CO2. Hydrolyzes ureidoacrylate to form aminoacrylate and carbamate. The carbamate hydrolyzes spontaneously, thereby releasing one of the nitrogen atoms of the pyrimidine ring as ammonia and one of its carbon atoms as CO2. The chain is Ureidoacrylate amidohydrolase RutB from Stutzerimonas stutzeri (strain A1501) (Pseudomonas stutzeri).